The following is a 243-amino-acid chain: uncharacterized protein (243 aa).

The helical transmembrane segment at 55 to 75 threads the bilayer; it reads IILIILLTIFMVISTLVIAFV.

It is found in the membrane. This is an uncharacterized protein from Rickettsia prowazekii (strain Madrid E).